Here is a 380-residue protein sequence, read N- to C-terminus: Putative 8-amino-7-oxononanoate synthase (380 aa).

Arg18 is a substrate binding site. A pyridoxal 5'-phosphate-binding site is contributed by 106–107; the sequence is GY. His131 is a binding site for substrate. Pyridoxal 5'-phosphate is bound by residues Ser179, 205–208, and 236–239; these read DEAH and TFGK. Lys239 carries the post-translational modification N6-(pyridoxal phosphate)lysine. Residue Thr352 coordinates substrate.

This sequence belongs to the class-II pyridoxal-phosphate-dependent aminotransferase family. BioF subfamily. As to quaternary structure, homodimer. Pyridoxal 5'-phosphate is required as a cofactor.

It carries out the reaction 6-carboxyhexanoyl-[ACP] + L-alanine + H(+) = (8S)-8-amino-7-oxononanoate + holo-[ACP] + CO2. Its pathway is cofactor biosynthesis; biotin biosynthesis. Functionally, catalyzes the decarboxylative condensation of pimeloyl-[acyl-carrier protein] and L-alanine to produce 8-amino-7-oxononanoate (AON), [acyl-carrier protein], and carbon dioxide. The polypeptide is Putative 8-amino-7-oxononanoate synthase (bioF) (Neisseria gonorrhoeae (strain ATCC 700825 / FA 1090)).